The chain runs to 314 residues: Glutathione synthetase (314 aa).

The region spanning 125 to 311 (EKIAAQLFPQ…IAGQLFDAIE (187 aa)) is the ATP-grasp domain. 151-208 (FVQKQEQAILKPLDGMGGHSIFRSSNGDPNLNVILETLTDGGRTLAIAQRYLQQIIEG) provides a ligand contact to ATP. Residues E282 and N284 each contribute to the Mg(2+) site.

Belongs to the prokaryotic GSH synthase family. It depends on Mg(2+) as a cofactor. Mn(2+) is required as a cofactor.

It catalyses the reaction gamma-L-glutamyl-L-cysteine + glycine + ATP = glutathione + ADP + phosphate + H(+). Its pathway is sulfur metabolism; glutathione biosynthesis; glutathione from L-cysteine and L-glutamate: step 2/2. This chain is Glutathione synthetase, found in Xylella fastidiosa (strain Temecula1 / ATCC 700964).